The primary structure comprises 49 residues: uncharacterized protein (49 aa).

A signal peptide spans 1 to 22 (MIQKPILLSSFLFLYIRALLHS).

This is an uncharacterized protein from Saccharomyces cerevisiae (strain ATCC 204508 / S288c) (Baker's yeast).